A 378-amino-acid chain; its full sequence is Beta-1,3-N-acetylglucosaminyltransferase lunatic fringe (378 aa).

Topologically, residues 1–8 (MLQRCGRR) are cytoplasmic. A helical; Signal-anchor for type II membrane protein transmembrane segment spans residues 9–29 (LLLALVGALLACLLVLTADPP). The Lumenal segment spans residues 30–378 (PTPMPAERGR…TPWCPRSAIF (349 aa)). A disordered region spans residues 85 to 108 (RDADPPPGVASRQGDGHPRPPAEV). Arg128 serves as a coordination point for substrate. Residue Asn166 is glycosylated (N-linked (GlcNAc...) asparagine). Intrachain disulfides connect Cys167–Cys178 and Cys196–Cys259. A substrate-binding site is contributed by Asp200. Asp201 serves as a coordination point for Mn(2+). Asp289 is an active-site residue. Residue His313 coordinates Mn(2+). Residues Cys363 and Cys372 are joined by a disulfide bond.

This sequence belongs to the glycosyltransferase 31 family. Requires Mn(2+) as cofactor. Co(2+) serves as cofactor. A soluble form may be derived from the membrane form by proteolytic processing. Detected at 12.5 dpc in all tissues examined with the highest level observed in adult brain and spleen. Detected in the dental epithelium.

The protein localises to the golgi apparatus. It localises to the golgi apparatus membrane. It carries out the reaction 3-O-(alpha-L-fucosyl)-L-threonyl-[EGF-like domain protein] + UDP-N-acetyl-alpha-D-glucosamine = 3-O-(N-acetyl-beta-D-glucosaminyl-(1-&gt;3)-alpha-L-fucosyl)-L-threonyl-[EGF-like domain protein] + UDP + H(+). The catalysed reaction is 3-O-(alpha-L-fucosyl)-L-seryl-[EGF-like domain protein] + UDP-N-acetyl-alpha-D-glucosamine = 3-O-(N-acetyl-beta-D-glucosaminyl-(1-&gt;3)-alpha-L-fucosyl)-L-seryl-[EGF-like domain protein] + UDP + H(+). In terms of biological role, glycosyltransferase that initiates the elongation of O-linked fucose residues attached to EGF-like repeats in the extracellular domain of Notch molecules. Modulates NOTCH1 activity by modifying O-fucose residues at specific EGF-like domains resulting in inhibition of NOTCH1 activation by JAG1 and enhancement of NOTCH1 activation by DLL1 via an increase in its binding to DLL1. Decreases the binding of JAG1 to NOTCH2 but not that of DLL1. Essential mediator of somite segmentation and patterning. During somite boundary formation, it restricts Notch activity in the presomitic mesoderm to a boundary-forming territory in the posterior half of the prospective somite. In this region, Notch function activates a set of genes that are involved in boundary formation and in anterior-posterior somite identity. Ectopically expressed in the thymus, Lfgn inhibits Notch signaling which results in inhibition of T-cell commitment and promotes B-cell development in lymphoid progenitors. May play a role in boundary formation of the enamel knot. The chain is Beta-1,3-N-acetylglucosaminyltransferase lunatic fringe from Mus musculus (Mouse).